The chain runs to 55 residues: MAKAATIKIKLLSTADTGFFYVTKKNSRTMTDKMSKRKYDPIVKKHVEFKETKIK.

It belongs to the bacterial ribosomal protein bL33 family.

The chain is Large ribosomal subunit protein bL33 from Bartonella bacilliformis (strain ATCC 35685 / KC583 / Herrer 020/F12,63).